Reading from the N-terminus, the 528-residue chain is Putative galacturonosyltransferase 2 (528 aa).

Belongs to the glycosyltransferase 8 family.

The protein operates within glycan metabolism; pectin biosynthesis. May be involved in pectin and/or xylans biosynthesis in cell walls. This Arabidopsis thaliana (Mouse-ear cress) protein is Putative galacturonosyltransferase 2 (GAUT2).